A 121-amino-acid polypeptide reads, in one-letter code: Small ribosomal subunit protein uS13 (121 aa).

A disordered region spans residues Gly94 to Lys121.

The protein belongs to the universal ribosomal protein uS13 family. In terms of assembly, part of the 30S ribosomal subunit. Forms a loose heterodimer with protein S19. Forms two bridges to the 50S subunit in the 70S ribosome.

Its function is as follows. Located at the top of the head of the 30S subunit, it contacts several helices of the 16S rRNA. In the 70S ribosome it contacts the 23S rRNA (bridge B1a) and protein L5 of the 50S subunit (bridge B1b), connecting the 2 subunits; these bridges are implicated in subunit movement. Contacts the tRNAs in the A and P-sites. In Treponema pallidum (strain Nichols), this protein is Small ribosomal subunit protein uS13.